Here is a 127-residue protein sequence, read N- to C-terminus: UPF0102 protein ERGA_CDS_00540 (127 aa).

The protein belongs to the UPF0102 family.

This Ehrlichia ruminantium (strain Gardel) protein is UPF0102 protein ERGA_CDS_00540.